The following is an 82-amino-acid chain: Large ribosomal subunit protein bL27 (82 aa).

Positions 1–21 (MAHKKGASSSRNGRDSNAKRL) are disordered.

The protein belongs to the bacterial ribosomal protein bL27 family.

The polypeptide is Large ribosomal subunit protein bL27 (Tropheryma whipplei (strain Twist) (Whipple's bacillus)).